The primary structure comprises 973 residues: 109 kDa U5 small nuclear ribonucleoprotein component GFL (973 aa).

The tract at residues 1–40 is disordered; it reads MDGSLYGECGNYIGPEIESDRDSDDSVEDEDLQEPGGSNG. Over residues 17–33 the composition is skewed to acidic residues; it reads IESDRDSDDSVEDEDLQ. Residues 122-408 enclose the tr-type G domain; sequence ALVRNVALVG…LGVTLSNSAY (287 aa). The interval 131-138 is G1; that stretch reads GHLQHGKT. 131–138 contacts GTP; the sequence is GHLQHGKT. Residues 175–179 form a G2 region; sequence NISIK. Residues 201-204 form a G3 region; the sequence is DTPG. GTP is bound by residues 201–205 and 255–258; these read DTPGN and NKVD. Residues 255–258 are G4; it reads NKVD. The interval 381 to 383 is G5; sequence YSQ.

This sequence belongs to the TRAFAC class translation factor GTPase superfamily. Classic translation factor GTPase family. Expressed in flower buds, open flowers and siliques. Expressed at low levels in rosettes leaves, cauline leaves and stems.

Its subcellular location is the nucleus speckle. Splicing factor involved in pre-mRNA splicing and component of the spliceosome. The chain is 109 kDa U5 small nuclear ribonucleoprotein component GFL from Arabidopsis thaliana (Mouse-ear cress).